Consider the following 273-residue polypeptide: Dermonecrotic toxin LafSicTox-betaIE1 (273 aa).

His-5 is a catalytic residue. Positions 25 and 27 each coordinate Mg(2+). His-41 functions as the Nucleophile in the catalytic mechanism. 2 cysteine pairs are disulfide-bonded: Cys-45/Cys-51 and Cys-47/Cys-189. Residue Asp-85 participates in Mg(2+) binding. A glycan (N-linked (GlcNAc...) asparagine) is linked at Asn-250.

It belongs to the arthropod phospholipase D family. Class II subfamily. Mg(2+) serves as cofactor. In terms of tissue distribution, expressed by the venom gland.

It localises to the secreted. It catalyses the reaction an N-(acyl)-sphingosylphosphocholine = an N-(acyl)-sphingosyl-1,3-cyclic phosphate + choline. It carries out the reaction an N-(acyl)-sphingosylphosphoethanolamine = an N-(acyl)-sphingosyl-1,3-cyclic phosphate + ethanolamine. The catalysed reaction is a 1-acyl-sn-glycero-3-phosphocholine = a 1-acyl-sn-glycero-2,3-cyclic phosphate + choline. The enzyme catalyses a 1-acyl-sn-glycero-3-phosphoethanolamine = a 1-acyl-sn-glycero-2,3-cyclic phosphate + ethanolamine. In terms of biological role, dermonecrotic toxins cleave the phosphodiester linkage between the phosphate and headgroup of certain phospholipids (sphingolipid and lysolipid substrates), forming an alcohol (often choline) and a cyclic phosphate. This toxin acts on sphingomyelin (SM). It may also act on ceramide phosphoethanolamine (CPE), lysophosphatidylcholine (LPC) and lysophosphatidylethanolamine (LPE), but not on lysophosphatidylserine (LPS), and lysophosphatidylglycerol (LPG). It acts by transphosphatidylation, releasing exclusively cyclic phosphate products as second products. Induces dermonecrosis, hemolysis, increased vascular permeability, edema, inflammatory response, and platelet aggregation. The polypeptide is Dermonecrotic toxin LafSicTox-betaIE1 (Loxosceles aff. spinulosa (strain GJB-2008) (Recluse spider)).